Consider the following 387-residue polypeptide: Protein ERD1 homolog 2 (387 aa).

The next 8 membrane-spanning stretches (helical) occupy residues 20–40 (IGLLVIVGTWLWSVCYHLIYI), 92–112 (AGYCFAAILSISWATGFILFL), 126–146 (PIYPLLWVITAFILIVFPFPW), 177–197 (FIVSEIFTSYAKALGDFYIFG), 217–237 (GTFFVPLAMAYPFIVAILQCL), 252–272 (LLSALKHATALPVIYLSAIIH), 285–305 (GYLFWLWILSALLSSAYTFLW), and 326–346 (FPMFIYAIGCFINFILRVTWS). Residues 212–387 (DLKCDGTFFV…LFFHLDAISS (176 aa)) form the EXS domain.

The protein belongs to the ERD1 family.

It is found in the membrane. This chain is Protein ERD1 homolog 2, found in Schizosaccharomyces pombe (strain 972 / ATCC 24843) (Fission yeast).